The sequence spans 506 residues: Aspartic proteinase A1 (506 aa).

A signal peptide spans methionine 1–alanine 24. The propeptide at glutamate 25 to glycine 64 is activation peptide. A Peptidase A1 domain is found at tyrosine 82–alanine 503. Aspartate 100 is an active-site residue. Cystine bridges form between cysteine 113–cysteine 119 and cysteine 278–cysteine 282. The active site involves aspartate 287. Residues valine 312–proline 417 enclose the Saposin B-type domain. 4 cysteine pairs are disulfide-bonded: cysteine 317–cysteine 411, cysteine 342–cysteine 383, cysteine 348–cysteine 380, and cysteine 425–cysteine 462. A glycan (N-linked (GlcNAc...) asparagine) is linked at asparagine 397.

Belongs to the peptidase A1 family. Expressed in roots, leaves, stems, petals, carpels, seed pods and dry seeds.

The protein localises to the vacuole. In terms of biological role, involved in the breakdown of propeptides of storage proteins in protein-storage vacuoles. Possesses aspartic protease activity in vitro. This Arabidopsis thaliana (Mouse-ear cress) protein is Aspartic proteinase A1 (APA1).